Here is a 117-residue protein sequence, read N- to C-terminus: Acidic phospholipase A2 PA-1G (117 aa).

Intrachain disulfides connect Cys-11-Cys-71, Cys-27-Cys-117, Cys-29-Cys-45, Cys-44-Cys-98, Cys-51-Cys-91, Cys-60-Cys-84, and Cys-78-Cys-89. Residues Tyr-28, Gly-30, and Gly-32 each coordinate Ca(2+). His-48 is a catalytic residue. Asp-49 contributes to the Ca(2+) binding site. Asp-92 is an active-site residue.

It belongs to the phospholipase A2 family. Group I subfamily. D49 sub-subfamily. It depends on Ca(2+) as a cofactor. In terms of tissue distribution, expressed by the venom gland.

The protein resides in the secreted. It catalyses the reaction a 1,2-diacyl-sn-glycero-3-phosphocholine + H2O = a 1-acyl-sn-glycero-3-phosphocholine + a fatty acid + H(+). PLA2 catalyzes the calcium-dependent hydrolysis of the 2-acyl groups in 3-sn-phosphoglycerides. This chain is Acidic phospholipase A2 PA-1G, found in Pseudechis australis (Mulga snake).